The primary structure comprises 405 residues: Acetate kinase (405 aa).

Residue Asn7 participates in Mg(2+) binding. An ATP-binding site is contributed by Lys14. Arg92 provides a ligand contact to substrate. Asp149 functions as the Proton donor/acceptor in the catalytic mechanism. Residues 209–213 (HLGNG) and 284–286 (DMR) each bind ATP. Residue Glu389 coordinates Mg(2+).

This sequence belongs to the acetokinase family. As to quaternary structure, homodimer. Mg(2+) is required as a cofactor. It depends on Mn(2+) as a cofactor.

Its subcellular location is the cytoplasm. The catalysed reaction is acetate + ATP = acetyl phosphate + ADP. Its pathway is metabolic intermediate biosynthesis; acetyl-CoA biosynthesis; acetyl-CoA from acetate: step 1/2. In terms of biological role, catalyzes the formation of acetyl phosphate from acetate and ATP. Can also catalyze the reverse reaction. This is Acetate kinase from Borrelia garinii subsp. bavariensis (strain ATCC BAA-2496 / DSM 23469 / PBi) (Borreliella bavariensis).